Reading from the N-terminus, the 62-residue chain is Large ribosomal subunit protein eL37 (62 aa).

The Zn(2+) site is built by C20, C23, C35, and C38. The segment at 20–38 adopts a C4-type zinc-finger fold; sequence CRRCGRHSFNVAKGYCAAC.

It belongs to the eukaryotic ribosomal protein eL37 family. Zn(2+) serves as cofactor.

Binds to the 23S rRNA. This chain is Large ribosomal subunit protein eL37, found in Desulfurococcus amylolyticus (strain DSM 18924 / JCM 16383 / VKM B-2413 / 1221n) (Desulfurococcus kamchatkensis).